Consider the following 266-residue polypeptide: Type III pantothenate kinase (266 aa).

6–13 is a binding site for ATP; that stretch reads DVGNSHTV. 112 to 115 lines the substrate pocket; it reads GIDR. The active-site Proton acceptor is aspartate 114. Aspartate 134 provides a ligand contact to K(+). ATP is bound at residue threonine 137. Residue threonine 190 coordinates substrate.

The protein belongs to the type III pantothenate kinase family. In terms of assembly, homodimer. NH4(+) serves as cofactor. It depends on K(+) as a cofactor.

It localises to the cytoplasm. The catalysed reaction is (R)-pantothenate + ATP = (R)-4'-phosphopantothenate + ADP + H(+). It participates in cofactor biosynthesis; coenzyme A biosynthesis; CoA from (R)-pantothenate: step 1/5. In terms of biological role, catalyzes the phosphorylation of pantothenate (Pan), the first step in CoA biosynthesis. In Desulfotalea psychrophila (strain LSv54 / DSM 12343), this protein is Type III pantothenate kinase.